Here is a 453-residue protein sequence, read N- to C-terminus: 3-phosphoshikimate 1-carboxyvinyltransferase (453 aa).

The interval 1–25 is disordered; that stretch reads MSHDSEPQPVTAHPAGPLTGALKPP. The 3-phosphoshikimate site is built by K28, S29, and R33. K28 contributes to the phosphoenolpyruvate binding site. Phosphoenolpyruvate is bound by residues G101 and R129. 3-phosphoshikimate contacts are provided by S175, Q177, D330, and K357. Q177 lines the phosphoenolpyruvate pocket. D330 (proton acceptor) is an active-site residue. Residues R361 and R405 each contribute to the phosphoenolpyruvate site.

The protein belongs to the EPSP synthase family. As to quaternary structure, monomer.

It is found in the cytoplasm. It catalyses the reaction 3-phosphoshikimate + phosphoenolpyruvate = 5-O-(1-carboxyvinyl)-3-phosphoshikimate + phosphate. It functions in the pathway metabolic intermediate biosynthesis; chorismate biosynthesis; chorismate from D-erythrose 4-phosphate and phosphoenolpyruvate: step 6/7. Catalyzes the transfer of the enolpyruvyl moiety of phosphoenolpyruvate (PEP) to the 5-hydroxyl of shikimate-3-phosphate (S3P) to produce enolpyruvyl shikimate-3-phosphate and inorganic phosphate. The polypeptide is 3-phosphoshikimate 1-carboxyvinyltransferase (Methylorubrum populi (strain ATCC BAA-705 / NCIMB 13946 / BJ001) (Methylobacterium populi)).